A 308-amino-acid polypeptide reads, in one-letter code: Oligopeptide transport system permease protein AmiD (308 aa).

The next 6 membrane-spanning stretches (helical) occupy residues Thr43–Phe63, Ile111–Ile131, Val145–Ala167, Asn171–Leu193, Met234–Ile254, and Ala274–Val294. The ABC transmembrane type-1 domain maps to Ala107–Gly295.

Belongs to the binding-protein-dependent transport system permease family. OppBC subfamily.

The protein resides in the cell membrane. Its function is as follows. Part of the binding-protein-dependent transport system for oligopeptides; probably responsible for the translocation of the substrate across the membrane. This chain is Oligopeptide transport system permease protein AmiD (amiD), found in Streptococcus pneumoniae (strain ATCC BAA-255 / R6).